The chain runs to 485 residues: WAS/WASL-interacting protein family member 3 (485 aa).

Positions Met-1 to Pro-30 are enriched in pro residues. Residues Met-1 to Arg-485 are disordered. Short sequence motifs (profilin-binding motif) lie at residues Val-3 to Pro-8, Leu-11 to Pro-16, and Ala-20 to Pro-25. Residues Gly-45–Val-62 enclose the WH2 domain. Arg-46 is modified (asymmetric dimethylarginine). An RLRK motif is present at residues Arg-58–Lys-61. The segment covering Thr-63–Gly-78 has biased composition (polar residues). Ser-150 is subject to Phosphoserine. Pro residues-rich tracts occupy residues Pro-165–Ser-200 and Val-207–Pro-243. The residue at position 208 (Ser-208) is a Phosphoserine. The span at Ala-244 to Leu-259 shows a compositional bias: low complexity. Pro residues-rich tracts occupy residues His-260 to Gly-275 and Pro-293 to Pro-312. Phosphoserine is present on Ser-394. Residues Thr-396–Gly-407 show a composition bias toward polar residues. Positions Val-417–Pro-441 are enriched in basic and acidic residues. Residues Thr-426–Val-450 carry the WASP-binding motif motif. The span at Arg-475–Arg-485 shows a compositional bias: polar residues.

This sequence belongs to the verprolin family. Isoform 1 interacts with WASL (via WH1 domain), and monomeric and filamentous actin. In terms of tissue distribution, detected mainly in brain and at lower levels in heart and lung (at protein level). Also detected in testis but not in kidney, liver or spleen.

Its subcellular location is the cytoplasm. Functionally, may have a role in spermatogenesis. May be a regulator of cytoskeletal organization. In Rattus norvegicus (Rat), this protein is WAS/WASL-interacting protein family member 3 (Wipf3).